We begin with the raw amino-acid sequence, 58 residues long: MEAMKMKMMVFIMVVAVAFSAATAATVEAPAPSPTSDAAMFVPALFASVVALASGFIF.

Positions M1–A24 are cleaved as a signal peptide. Residues P30, P32, and P34 each carry the 4-hydroxyproline modification. 3 O-linked (Ara...) hydroxyproline glycosylation sites follow: P30, P32, and P34. A lipid anchor (GPI-anchor amidated serine) is attached at S36. The propeptide at D37 to F58 is removed in mature form.

The protein belongs to the AG-peptide AGP family. Contains 4-hydroxyproline; hydroxylated on Pro-30, Pro-32 and Pro-34. Post-translationally, O-glycosylated on hydroxyprolines; noncontiguous hydroxylproline residues are glycosylated with arabinogalactan.

It is found in the cell membrane. In terms of biological role, proteoglycan that seems to be implicated in diverse developmental roles such as differentiation, cell-cell recognition, embryogenesis and programmed cell death. In Arabidopsis thaliana (Mouse-ear cress), this protein is Arabinogalactan protein 21.